The primary structure comprises 196 residues: Nucleoid occlusion factor SlmA (196 aa).

Positions 7–68 (TNRREEILQA…GLIEFIEEAL (62 aa)) constitute an HTH tetR-type domain. The segment at residues 31-50 (TTAKLAKQVGVSEAALYRHF) is a DNA-binding region (H-T-H motif). Residues 110 to 142 (HALMFENERLRDRINQLFERIETQLRQILRERK) are a coiled coil.

This sequence belongs to the nucleoid occlusion factor SlmA family. As to quaternary structure, homodimer. Interacts with FtsZ.

The protein localises to the cytoplasm. It localises to the nucleoid. Its function is as follows. Required for nucleoid occlusion (NO) phenomenon, which prevents Z-ring formation and cell division over the nucleoid. Acts as a DNA-associated cell division inhibitor that binds simultaneously chromosomal DNA and FtsZ, and disrupts the assembly of FtsZ polymers. SlmA-DNA-binding sequences (SBS) are dispersed on non-Ter regions of the chromosome, preventing FtsZ polymerization at these regions. This chain is Nucleoid occlusion factor SlmA, found in Vibrio campbellii (strain ATCC BAA-1116).